The primary structure comprises 215 residues: uncharacterized protein (215 aa).

Catalysis depends on charge relay system residues Ser114, Asp162, and His194.

The protein belongs to the AB hydrolase superfamily. AB hydrolase 2 family.

This is an uncharacterized protein from Rickettsia felis (strain ATCC VR-1525 / URRWXCal2) (Rickettsia azadi).